A 51-amino-acid chain; its full sequence is Ribosome biogenesis protein Nop10 (51 aa).

This sequence belongs to the NOP10 family.

Involved in ribosome biogenesis; more specifically in 18S rRNA pseudouridylation and in cleavage of pre-rRNA. In Methanococcus maripaludis (strain C7 / ATCC BAA-1331), this protein is Ribosome biogenesis protein Nop10.